The sequence spans 215 residues: uncharacterized protein (215 aa).

Transmembrane regions (helical) follow at residues 21-40 (IIKYIVIFFLFYIISTVLIN), 50-69 (LIFSVICLLISLISFSTIIF), 95-117 (FVAIFICTTVGLIFVLPVIYVFF), 122-144 (LEIALFFISVWMIFVLSSSLVVL), 157-179 (NFVGTFIMPLLIPNIIMTGLILQ), and 185-207 (LIFIMIGINLIFLPVSFCLSAYL).

It belongs to the CcmB/CycW/HelB family.

The protein resides in the cell membrane. This is an uncharacterized protein from Rickettsia prowazekii (strain Madrid E).